We begin with the raw amino-acid sequence, 276 residues long: Putative pyridoxine kinase (276 aa).

Asparagine 139 lines the ATP pocket. Glutamate 142 provides a ligand contact to Mg(2+). Residues 176-180 (KGGKA), aspartate 188, glycine 213, and lysine 238 contribute to the ATP site.

This sequence belongs to the ThiD family.

The enzyme catalyses pyridoxal + ATP = pyridoxal 5'-phosphate + ADP + H(+). In terms of biological role, phosphorylates B6 vitamers; functions in a salvage pathway. Uses pyridoxal, pyridoxine, and pyridoxamine as substrates. This is Putative pyridoxine kinase (pdxK) from Staphylococcus aureus (strain COL).